Reading from the N-terminus, the 127-residue chain is Large ribosomal subunit protein bL20c (127 aa).

Belongs to the bacterial ribosomal protein bL20 family.

Its subcellular location is the plastid. It localises to the chloroplast. In terms of biological role, binds directly to 23S ribosomal RNA and is necessary for the in vitro assembly process of the 50S ribosomal subunit. It is not involved in the protein synthesizing functions of that subunit. The protein is Large ribosomal subunit protein bL20c of Jasminum nudiflorum (Winter jasmine).